Reading from the N-terminus, the 474-residue chain is Cysteine--tRNA ligase (474 aa).

Zn(2+) is bound at residue Cys30. Positions Pro32–Asn42 match the 'HIGH' region motif. The Zn(2+) site is built by Cys215, His240, and Glu244. The 'KMSKS' region motif lies at Lys272–Ser276. Lys275 provides a ligand contact to ATP.

This sequence belongs to the class-I aminoacyl-tRNA synthetase family. Monomer. It depends on Zn(2+) as a cofactor.

It localises to the cytoplasm. The catalysed reaction is tRNA(Cys) + L-cysteine + ATP = L-cysteinyl-tRNA(Cys) + AMP + diphosphate. In Brachyspira hyodysenteriae (strain ATCC 49526 / WA1), this protein is Cysteine--tRNA ligase.